Here is a 410-residue protein sequence, read N- to C-terminus: Pyrophosphate--fructose 6-phosphate 1-phosphotransferase (410 aa).

Glycine 12 contacts diphosphate. Aspartate 121 serves as a coordination point for Mg(2+). Substrate contacts are provided by residues 149-151 (TID), 194-196 (MGR), glutamate 266, and 323-326 (YFSR). The active-site Proton acceptor is the aspartate 151.

This sequence belongs to the phosphofructokinase type A (PFKA) family. PPi-dependent PFK group II subfamily. Clade 'P' sub-subfamily. In terms of assembly, homodimer or homotetramer. Mg(2+) is required as a cofactor.

The protein localises to the cytoplasm. The catalysed reaction is beta-D-fructose 6-phosphate + diphosphate = beta-D-fructose 1,6-bisphosphate + phosphate + H(+). Its pathway is carbohydrate degradation; glycolysis; D-glyceraldehyde 3-phosphate and glycerone phosphate from D-glucose: step 3/4. Its activity is regulated as follows. Non-allosteric. Catalyzes the phosphorylation of D-fructose 6-phosphate, the first committing step of glycolysis. Uses inorganic phosphate (PPi) as phosphoryl donor instead of ATP like common ATP-dependent phosphofructokinases (ATP-PFKs), which renders the reaction reversible, and can thus function both in glycolysis and gluconeogenesis. Consistently, PPi-PFK can replace the enzymes of both the forward (ATP-PFK) and reverse (fructose-bisphosphatase (FBPase)) reactions. The sequence is that of Pyrophosphate--fructose 6-phosphate 1-phosphotransferase from Mastigamoeba balamuthi (Phreatamoeba balamuthi).